The following is a 309-amino-acid chain: tRNA N6-adenosine threonylcarbamoyltransferase (309 aa).

Positions 108 and 112 each coordinate Fe cation. Substrate contacts are provided by residues 130-134 (LVSGG), Asp163, Gly176, Asp180, and Asn269. Position 293 (Asp293) interacts with Fe cation.

Belongs to the KAE1 / TsaD family. The cofactor is Fe(2+).

Its subcellular location is the cytoplasm. It catalyses the reaction L-threonylcarbamoyladenylate + adenosine(37) in tRNA = N(6)-L-threonylcarbamoyladenosine(37) in tRNA + AMP + H(+). In terms of biological role, required for the formation of a threonylcarbamoyl group on adenosine at position 37 (t(6)A37) in tRNAs that read codons beginning with adenine. Is involved in the transfer of the threonylcarbamoyl moiety of threonylcarbamoyl-AMP (TC-AMP) to the N6 group of A37, together with TsaE and TsaB. TsaD likely plays a direct catalytic role in this reaction. This is tRNA N6-adenosine threonylcarbamoyltransferase from Mycoplasmopsis agalactiae (strain NCTC 10123 / CIP 59.7 / PG2) (Mycoplasma agalactiae).